Consider the following 110-residue polypeptide: Competence pilus inhibition repressor (110 aa).

The region spanning 7 to 61 (VRFLRKRQGWTQQQLADFSHTSKSNISNLENGNQGYSPAILEYLAKAFNCSVSQI) is the HTH cro/C1-type domain. A DNA-binding region (H-T-H motif) is located at residues 18 to 37 (QQQLADFSHTSKSNISNLEN).

Represses transcription of the PilB-specific inhibitory protein CpiA. This Acinetobacter baylyi (strain ATCC 33305 / BD413 / ADP1) protein is Competence pilus inhibition repressor.